The chain runs to 327 residues: Alkene monooxygenase system, ferredoxin--NAD(+) reductase component (327 aa).

The 89-residue stretch at 1 to 89 (MRLNDGRSFS…DLEINVRAGD (89 aa)) folds into the 2Fe-2S ferredoxin-type domain. [2Fe-2S] cluster is bound by residues Cys32, Cys37, Cys40, and Cys73. One can recognise an FAD-binding FR-type domain in the interval 96–194 (PRRHAARVTV…EGPYGRAYLR (99 aa)).

Belongs to the bacterial ring-hydroxylating dioxygenase ferredoxin reductase family. In terms of assembly, monomer. The alkene monooxygenase multicomponent enzyme system is composed of an electron transfer component and a monooxygenase component interacting with the effector protein XamoD. The electron transfer component is composed of a ferredoxin reductase (XamoF) and a ferredoxin (XamoC), and the monooxygenase component is formed by a heterohexamer (dimer of heterotrimers) of two alpha subunits (XamoA), two beta subunits (XamoE) and two gamma subunits (XamoB). FAD is required as a cofactor. Requires [2Fe-2S] cluster as cofactor.

The protein localises to the cytoplasm. The enzyme catalyses 2 reduced [2Fe-2S]-[ferredoxin] + NAD(+) + H(+) = 2 oxidized [2Fe-2S]-[ferredoxin] + NADH. Its function is as follows. Reductase component of the alkene monooxygenase multicomponent enzyme system which catalyzes the O2- and NADH-dependent epoxidation of short chain (C2 to C6) alkenes to their corresponding epoxides. Ferredoxin reductase catalyzes the transfer of electrons from NADH to ferredoxin (XamoC). NADPH is also effective but with a rate approximately 3-fold lower than with NADH. The polypeptide is Alkene monooxygenase system, ferredoxin--NAD(+) reductase component (Xanthobacter autotrophicus (strain ATCC BAA-1158 / Py2)).